The chain runs to 145 residues: MTLQRTFVMIKPDGVRRRLVGEIISRFEKRGFNILALKMVHMDRATAERLYQEHKGKGFFNELINYIISGPVVCMIIEGDDAVSVVRKMIGATDPKEASPGTIRGDYALSKSENVIHASDSEEKAKTEMGIFFQDVTEIGAQARM.

K11, F59, R87, T93, R104, and N114 together coordinate ATP. H117 serves as the catalytic Pros-phosphohistidine intermediate.

Belongs to the NDK family. Mg(2+) serves as cofactor.

It is found in the cytoplasm. It carries out the reaction a 2'-deoxyribonucleoside 5'-diphosphate + ATP = a 2'-deoxyribonucleoside 5'-triphosphate + ADP. The enzyme catalyses a ribonucleoside 5'-diphosphate + ATP = a ribonucleoside 5'-triphosphate + ADP. Its function is as follows. Major role in the synthesis of nucleoside triphosphates other than ATP. The ATP gamma phosphate is transferred to the NDP beta phosphate via a ping-pong mechanism, using a phosphorylated active-site intermediate. The chain is Nucleoside diphosphate kinase from Sulfolobus acidocaldarius (strain ATCC 33909 / DSM 639 / JCM 8929 / NBRC 15157 / NCIMB 11770).